The following is a 156-amino-acid chain: MSRRRRAKKRIICPDSIYDSRLINMLVNRVMKDGKKSLAYKIVYQTMDQIAEKTEQDPIQILEEAVRNTKPLVEVKARRVGGSAYQVPLEVNPERGTVLALQWVLAAARNRSGRSAIAKLTNELIDASKKTGGAIKKRDDVHRMAEANKAFAKFRF.

Belongs to the universal ribosomal protein uS7 family. As to quaternary structure, part of the 30S ribosomal subunit.

The protein resides in the plastid. Its subcellular location is the chloroplast. Functionally, one of the primary rRNA binding proteins, it binds directly to 16S rRNA where it nucleates assembly of the head domain of the 30S subunit. This is Small ribosomal subunit protein uS7c (rps7) from Tupiella akineta (Green alga).